The following is a 135-amino-acid chain: Congerin-1 (135 aa).

S1 carries the N-acetylserine modification. Residues 3–135 (GLQVKNFDFT…GDARLTLVKE (133 aa)) form the Galectin domain. 70–76 (WETEQRS) lines the a beta-D-galactoside pocket.

As to quaternary structure, homodimer.

This protein binds beta-galactoside. Its physiological function is not yet known. The protein is Congerin-1 of Conger myriaster (Conger eel).